The primary structure comprises 196 residues: Ribosome maturation factor RimP (196 aa).

Over residues 131–145 (KKKAGKKSQGKKAGK) the composition is skewed to basic residues. The tract at residues 131–153 (KKKAGKKSQGKKAGKKTPQAPVQ) is disordered.

It belongs to the RimP family.

It localises to the cytoplasm. Functionally, required for maturation of 30S ribosomal subunits. The chain is Ribosome maturation factor RimP from Corynebacterium urealyticum (strain ATCC 43042 / DSM 7109).